Consider the following 338-residue polypeptide: Ketol-acid reductoisomerase (NADP(+)) (338 aa).

The 181-residue stretch at 1–181 (MKIYYDKDCN…GGGRAGIIET (181 aa)) folds into the KARI N-terminal Rossmann domain. Residues 24-27 (YGSQ), arginine 47, serine 50, serine 52, and 82-85 (DETQ) each bind NADP(+). Histidine 107 is an active-site residue. Glycine 133 is an NADP(+) binding site. The KARI C-terminal knotted domain maps to 182-327 (SFKEETETDL…ARLRSMMSWI (146 aa)). Mg(2+)-binding residues include aspartate 190, glutamate 194, glutamate 226, and glutamate 230. Serine 251 lines the substrate pocket.

It belongs to the ketol-acid reductoisomerase family. Requires Mg(2+) as cofactor.

The enzyme catalyses (2R)-2,3-dihydroxy-3-methylbutanoate + NADP(+) = (2S)-2-acetolactate + NADPH + H(+). It carries out the reaction (2R,3R)-2,3-dihydroxy-3-methylpentanoate + NADP(+) = (S)-2-ethyl-2-hydroxy-3-oxobutanoate + NADPH + H(+). Its pathway is amino-acid biosynthesis; L-isoleucine biosynthesis; L-isoleucine from 2-oxobutanoate: step 2/4. The protein operates within amino-acid biosynthesis; L-valine biosynthesis; L-valine from pyruvate: step 2/4. Functionally, involved in the biosynthesis of branched-chain amino acids (BCAA). Catalyzes an alkyl-migration followed by a ketol-acid reduction of (S)-2-acetolactate (S2AL) to yield (R)-2,3-dihydroxy-isovalerate. In the isomerase reaction, S2AL is rearranged via a Mg-dependent methyl migration to produce 3-hydroxy-3-methyl-2-ketobutyrate (HMKB). In the reductase reaction, this 2-ketoacid undergoes a metal-dependent reduction by NADPH to yield (R)-2,3-dihydroxy-isovalerate. This chain is Ketol-acid reductoisomerase (NADP(+)), found in Geobacter metallireducens (strain ATCC 53774 / DSM 7210 / GS-15).